The primary structure comprises 366 residues: Glucose 1-dehydrogenase (366 aa).

Cysteine 39 is a binding site for Zn(2+). Residue threonine 41 coordinates substrate. Histidine 66 and glutamate 67 together coordinate Zn(2+). Asparagine 89 provides a ligand contact to substrate. Zn(2+) contacts are provided by cysteine 93, cysteine 96, cysteine 99, and cysteine 107. 3 residues coordinate substrate: glutamate 114, glutamine 150, and aspartate 154. Glutamine 150 is a binding site for Zn(2+). NADP(+) is bound by residues 189–192, 211–213, 277–279, 305–307, and lysine 354; these read TGPI, NRR, FGF, and LVN. Asparagine 307 provides a ligand contact to substrate.

This sequence belongs to the zinc-containing alcohol dehydrogenase family. Glucose 1-dehydrogenase subfamily. Homotetramer. It depends on Zn(2+) as a cofactor.

It catalyses the reaction D-glucose + NAD(+) = D-glucono-1,5-lactone + NADH + H(+). The enzyme catalyses D-glucose + NADP(+) = D-glucono-1,5-lactone + NADPH + H(+). The catalysed reaction is D-galactose + NAD(+) = D-galactono-1,4-lactone + NADH + H(+). It carries out the reaction D-galactose + NADP(+) = D-galactono-1,5-lactone + NADPH + H(+). It catalyses the reaction an aldopyranose + NAD(+) = aldono-1,5-lactone + NADH + H(+). The enzyme catalyses an aldopyranose + NADP(+) = aldono-1,5-lactone + NADPH + H(+). With respect to regulation, inhibited by EDTA in vitro. Catalyzes the NAD(P)(+)-dependent oxidation of D-glucose to D-gluconate via gluconolactone. Displays broad substrate specificity since it is able to catalyze the oxidation of a number of alternative aldose sugars, such as D-galactose, D-xylose and L-arabinose, to the corresponding glyconate. Can utilize both NAD(+) and NADP(+) as electron acceptor. Physiologically, seems to be involved in the degradation of both glucose and galactose through a non-phosphorylative variant of the Entner-Doudoroff pathway. The protein is Glucose 1-dehydrogenase of Saccharolobus solfataricus (Sulfolobus solfataricus).